Consider the following 154-residue polypeptide: Prefoldin subunit alpha (154 aa).

The protein belongs to the prefoldin alpha subunit family. Heterohexamer of two alpha and four beta subunits.

The protein resides in the cytoplasm. In terms of biological role, molecular chaperone capable of stabilizing a range of proteins. Seems to fulfill an ATP-independent, HSP70-like function in archaeal de novo protein folding. The polypeptide is Prefoldin subunit alpha (Hyperthermus butylicus (strain DSM 5456 / JCM 9403 / PLM1-5)).